We begin with the raw amino-acid sequence, 1190 residues long: Phosphatidylinositol 3,4,5-trisphosphate 5-phosphatase 1 (1190 aa).

The region spanning 8–104 is the SH2 domain; the sequence is WNHGNITRSK…GLVTHLQFPV (97 aa). Over residues 111-120 the composition is skewed to acidic residues; sequence AIDEPEEDTE. The disordered stretch occupies residues 111–130; the sequence is AIDEPEEDTESVMSPPELPP. The SH3-binding 1 motif lies at 126–131; sequence PELPPR. S245 carries the post-translational modification Phosphoserine. The short motif at 914–917 is the NPXY motif 1 element; that stretch reads NPNY. Y917 is subject to Phosphotyrosine. Residue S934 is modified to Phosphoserine. Position 944 is a phosphotyrosine (Y944). The disordered stretch occupies residues 946–1190; it reads QLPKDSSLGP…ESLLGRTAMQ (245 aa). The segment covering 961-971 has biased composition (pro residues); the sequence is PPTPPSQPPLS. A Phosphothreonine modification is found at T963. Phosphoserine occurs at positions 966 and 971. Residues 969–974 carry the SH3-binding 2 motif; it reads PLSPKK. Residues 989 to 998 are compositionally biased toward basic and acidic residues; the sequence is QETRPGDLGK. The segment at 1014-1028 is interaction with DAB2; the sequence is MFENPLYGSVSPFPK. The NPXY motif 2 motif lies at 1017–1020; that stretch reads NPLY. Y1020 bears the Phosphotyrosine mark. The span at 1031-1045 shows a compositional bias: basic and acidic residues; it reads PRKEQESPKMMRKEP. The short motif at 1038 to 1049 is the SH3-binding 3 element; that stretch reads PKMMRKEPPPCP. The span at 1140 to 1149 shows a compositional bias: pro residues; the sequence is IPAPRPPLPV. Residues 1161-1183 are compositionally biased toward basic and acidic residues; the sequence is KGRDYRDNTELPHHGKHRQEESL.

Belongs to the inositol 1,4,5-trisphosphate 5-phosphatase family. Interacts with tyrosine phosphorylated forms of SHC1. Interacts with tyrosine phosphorylated form of DOK1. Interacts with tyrosine phosphorylated form of DOK3. Interacts with tyrosine phosphorylated form of SLAMF1/CD150. Interacts with PTPN11/SHP-2 in response to IL-3. Interacts with receptor EPOR. Interacts with receptors MS4A2/FCER1B and FCER1G. Interacts with receptors FCGR2B and FCGR3. Interacts with receptor FCGR2A, leading to regulate gene expression during the phagocytic process. Interacts with GRB2. Interacts with PLCG1. Interacts with tyrosine kinases SRC and TEC. Interacts with c-Met/MET. Interacts with MILR1 (tyrosine-phosphorylated). Can weakly interact (via NPXY motif 2) with DAB2 (via PID domain); the interaction is impaired by tyrosine phosphorylation of the NPXY motif. Interacts (via SH2 domain) with tyrosine phosphorylated KLRC1 (via ITIM). Interacts with MPL/TPOR. In terms of processing, tyrosine phosphorylated by the members of the SRC family after exposure to a diverse array of extracellular stimuli such as cytokines, growth factors, antibodies, chemokines, integrin ligands and hypertonic and oxidative stress. Phosphorylated upon IgG receptor FCGR2B-binding.

It localises to the cytoplasm. The protein localises to the cell membrane. The protein resides in the membrane raft. Its subcellular location is the cytoskeleton. The enzyme catalyses a 1,2-diacyl-sn-glycero-3-phospho-(1D-myo-inositol-3,4,5-trisphosphate) + H2O = a 1,2-diacyl-sn-glycero-3-phospho-(1D-myo-inositol-3,4-bisphosphate) + phosphate. It catalyses the reaction 1D-myo-inositol 1,3,4,5-tetrakisphosphate + H2O = 1D-myo-inositol 1,3,4-trisphosphate + phosphate. The catalysed reaction is a 1,2-diacyl-sn-glycero-3-phospho-(1D-myo-inositol-4,5-bisphosphate) + H2O = a 1,2-diacyl-sn-glycero-3-phospho-(1D-myo-inositol 4-phosphate) + phosphate. Activated upon translocation to the sites of synthesis of PtdIns(3,4,5)P3 in the membrane. Its function is as follows. Phosphatidylinositol (PtdIns) phosphatase that specifically hydrolyzes the 5-phosphate of phosphatidylinositol-3,4,5-trisphosphate (PtdIns(3,4,5)P3) to produce PtdIns(3,4)P2, thereby negatively regulating the PI3K (phosphoinositide 3-kinase) pathways. Also able to hydrolyze the 5-phosphate of phosphatidylinositol-4,5-bisphosphate (PtdIns(4,5)P3) and inositol 1,3,4,5-tetrakisphosphate. Acts as a negative regulator of B-cell antigen receptor signaling. Mediates signaling from the FC-gamma-RIIB receptor (FCGR2B), playing a central role in terminating signal transduction from activating immune/hematopoietic cell receptor systems. Acts as a negative regulator of myeloid cell proliferation/survival and chemotaxis, mast cell degranulation, immune cells homeostasis, integrin alpha-IIb/beta-3 signaling in platelets and JNK signaling in B-cells. Regulates proliferation of osteoclast precursors, macrophage programming, phagocytosis and activation and is required for endotoxin tolerance. Involved in the control of cell-cell junctions, CD32a signaling in neutrophils and modulation of EGF-induced phospholipase C activity. Key regulator of neutrophil migration, by governing the formation of the leading edge and polarization required for chemotaxis. Modulates FCGR3/CD16-mediated cytotoxicity in NK cells. Mediates the activin/TGF-beta-induced apoptosis through its Smad-dependent expression. The sequence is that of Phosphatidylinositol 3,4,5-trisphosphate 5-phosphatase 1 (Inpp5d) from Rattus norvegicus (Rat).